The primary structure comprises 993 residues: UPF0182 protein ROP_64500 (993 aa).

Transmembrane regions (helical) follow at residues 18–38 (VLLVLALVVAALLLVGPRLIS), 63–83 (LLLFLVVGVVVGGIVWLALLL), 114–134 (LFGLAIPIAVGLLAGLIAQSS), 174–194 (WLFVAVLLAFFASLVTHYIFG), 211–231 (VQLAVLAGTFILLKAVAYWFD), 260–280 (KLILLAIAVICAGAFFAAIFL), and 288–308 (MATALLVLSSILVGAVWPLVV). The disordered stretch occupies residues 904-948 (TGSVATAPSAEEGTPPETGTTPPVEQGAAPPAPTAPATPPSGTDV). Residues 908–926 (ATAPSAEEGTPPETGTTPP) are compositionally biased toward low complexity. Over residues 933–942 (PPAPTAPATP) the composition is skewed to pro residues.

Belongs to the UPF0182 family.

It is found in the cell membrane. The polypeptide is UPF0182 protein ROP_64500 (Rhodococcus opacus (strain B4)).